Here is a 431-residue protein sequence, read N- to C-terminus: Divergent protein kinase domain 1B (431 aa).

Topologically, residues 1-30 (MRRLRRLAHLVLFCPFSKRLQGRLPGLRVR) are cytoplasmic. Residues 5-6 (RR) carry the May mediate ER retention motif. The chain crosses the membrane as a helical span at residues 31–51 (CIFLAWLGVFAGSWLVYVHYS). At 52 to 431 (SYSERCRGHV…WKKISNTKYS (380 aa)) the chain is on the lumenal side. 2 disulfide bridges follow: Cys57-Cys94 and Cys62-Cys117.

It belongs to the DIPK family. Post-translationally, among the many cysteines in the lumenal domain, most are probably involved in disulfide bonds.

It localises to the endoplasmic reticulum membrane. The sequence is that of Divergent protein kinase domain 1B from Homo sapiens (Human).